The chain runs to 311 residues: Malate dehydrogenase (311 aa).

Residue 10–15 (GAGHTG) participates in NAD(+) binding. Substrate-binding residues include arginine 85 and arginine 91. NAD(+) is bound by residues asparagine 98 and 121-123 (LTN). Substrate is bound by residues asparagine 123 and arginine 154. Catalysis depends on histidine 178, which acts as the Proton acceptor.

It belongs to the LDH/MDH superfamily. MDH type 3 family.

It carries out the reaction (S)-malate + NAD(+) = oxaloacetate + NADH + H(+). Catalyzes the reversible oxidation of malate to oxaloacetate. The sequence is that of Malate dehydrogenase from Staphylococcus carnosus (strain TM300).